The primary structure comprises 382 residues: Pyrimidine monooxygenase RutA (382 aa).

Residues 68–69 (IK), Asn134, Glu143, 159–160 (RY), and Ser209 contribute to the FMN site.

Belongs to the NtaA/SnaA/DszA monooxygenase family. RutA subfamily.

It catalyses the reaction uracil + FMNH2 + NADH + O2 = (Z)-3-ureidoacrylate + FMN + NAD(+) + H2O + H(+). The catalysed reaction is thymine + FMNH2 + NADH + O2 = (Z)-2-methylureidoacrylate + FMN + NAD(+) + H2O + H(+). Catalyzes the pyrimidine ring opening between N-3 and C-4 by an unusual flavin hydroperoxide-catalyzed mechanism, adding oxygen atoms in the process to yield ureidoacrylate peracid, that immediately reacts with FMN forming ureidoacrylate and FMN-N(5)-oxide. The FMN-N(5)-oxide reacts spontaneously with NADH to produce FMN. Requires the flavin reductase RutF to regenerate FMN in vivo. This Escherichia coli O157:H7 protein is Pyrimidine monooxygenase RutA (rutA).